We begin with the raw amino-acid sequence, 267 residues long: Non-homologous end joining protein Ku (267 aa).

In terms of domain architecture, Ku spans 10-190; sequence ISFGLVSFPV…TKYTAKELEL (181 aa).

It belongs to the prokaryotic Ku family. In terms of assembly, homodimer. Interacts with LigD.

With LigD forms a non-homologous end joining (NHEJ) DNA repair enzyme, which repairs dsDNA breaks with reduced fidelity. Binds linear dsDNA with 5'- and 3'- overhangs but not closed circular dsDNA nor ssDNA. Recruits and stimulates the ligase activity of LigD. This Solibacter usitatus (strain Ellin6076) protein is Non-homologous end joining protein Ku.